Reading from the N-terminus, the 404-residue chain is Ubiquitin-like modifier-activating enzyme 5 (404 aa).

Serine 45 is subject to Phosphoserine. Glycine 83, aspartate 104, lysine 127, asparagine 150, and asparagine 184 together coordinate ATP. Residues cysteine 226 and cysteine 229 each coordinate Zn(2+). Cysteine 250 acts as the Glycyl thioester intermediate in catalysis. Zn(2+) contacts are provided by cysteine 303 and cysteine 308. A UFM1-interacting sequence (UIS) motif is present at residues 334 to 346 (IIHEDNEWGIELV). The linker stretch occupies residues 347–377 (SEVSEEELKNFSGPVPDLPEGITVAYTIPKK). Serine 358 and serine 393 each carry phosphoserine. The UFC1-binding sequence (UFC) motif lies at 389–404 (DSGESLEDLMAKMKNM).

Belongs to the ubiquitin-activating E1 family. UBA5 subfamily. Homodimer; homodimerization is required for UFM1 activation. Interacts (via UIS motif) with UFM1; binds UFM1 via a trans-binding mechanism in which UFM1 interacts with distinct sites in both subunits of the UBA5 homodimer. Interacts (via C-terminus) with UFC1. Interacts (via UIS motif) with GABARAPL2 and, with lower affinity, with GABARAP and GABARAPL1. Widely expressed.

It localises to the cytoplasm. The protein localises to the nucleus. The protein resides in the endoplasmic reticulum membrane. Its subcellular location is the golgi apparatus. In terms of biological role, E1-like enzyme which specifically catalyzes the first step in ufmylation. Activates UFM1 by first adenylating its C-terminal glycine residue with ATP, and thereafter linking this residue to the side chain of a cysteine residue in E1, yielding a UFM1-E1 thioester and free AMP. Activates UFM1 via a trans-binding mechanism, in which UFM1 interacts with distinct sites in both subunits of the UBA5 homodimer. Trans-binding also promotes stabilization of the UBA5 homodimer, and enhances ATP-binding. Transfer of UFM1 from UBA5 to the E2-like enzyme UFC1 also takes place using a trans mechanism. Ufmylation plays a key role in various processes, such as ribosome recycling, response to DNA damage, interferon response or reticulophagy (also called ER-phagy). Ufmylation is essential for erythroid differentiation of both megakaryocytes and erythrocytes. The sequence is that of Ubiquitin-like modifier-activating enzyme 5 from Homo sapiens (Human).